A 305-amino-acid chain; its full sequence is Acyl transferase (305 aa).

Active-site charge relay system residues include serine 114, aspartate 211, and histidine 241.

It belongs to the LuxD family.

It participates in lipid metabolism; fatty acid reduction for biolumincescence. In terms of biological role, acyl transferase is part of the fatty acid reductase system required for aldehyde biosynthesis; it produces fatty acids for the luminescent reaction. The protein is Acyl transferase of Vibrio campbellii (strain ATCC BAA-1116).